The sequence spans 97 residues: Class II hydrophobin 3 (97 aa).

Residues 1–16 (MKFFAAAALFIAGVLA) form the signal peptide. Intrachain disulfides connect C30–C79, C40–C70, C41–C53, and C80–C91.

This sequence belongs to the cerato-ulmin hydrophobin family. Homodimer. Homodimers further self-assemble to form highly ordered films at water-air interfaces through intermolecular interactions.

Its subcellular location is the secreted. It localises to the cell wall. Its function is as follows. Aerial growth, conidiation, and dispersal of filamentous fungi in the environment rely upon a capability of their secreting small amphipathic proteins called hydrophobins (HPBs) with low sequence identity. Class I can self-assemble into an outermost layer of rodlet bundles on aerial cell surfaces, conferring cellular hydrophobicity that supports fungal growth, development and dispersal; whereas Class II form highly ordered films at water-air interfaces through intermolecular interactions but contribute nothing to the rodlet structure. The polypeptide is Class II hydrophobin 3 (Trichoderma asperellum (strain ATCC 204424 / CBS 433.97 / NBRC 101777)).